The sequence spans 79 residues: MSEIGERVKKIVVEHLGVEPEKVVDGASFIDDLGADSLDTVELVMAFEEEFGCEIPDDAAETILTVGDATKFLEKNAKS.

The 76-residue stretch at 2–77 (SEIGERVKKI…DATKFLEKNA (76 aa)) folds into the Carrier domain. Serine 37 bears the O-(pantetheine 4'-phosphoryl)serine mark.

The protein belongs to the acyl carrier protein (ACP) family. 4'-phosphopantetheine is transferred from CoA to a specific serine of apo-ACP by AcpS. This modification is essential for activity because fatty acids are bound in thioester linkage to the sulfhydryl of the prosthetic group.

It localises to the cytoplasm. It participates in lipid metabolism; fatty acid biosynthesis. Functionally, carrier of the growing fatty acid chain in fatty acid biosynthesis. The protein is Acyl carrier protein of Rhodopseudomonas palustris (strain HaA2).